The chain runs to 147 residues: Lysozyme C, tracheal isozyme (147 aa).

An N-terminal signal peptide occupies residues 1 to 18 (MKALLILGLLLLSVAVQG). The C-type lysozyme domain maps to 19–147 (KTFKRCELAK…LTSYVKGCGV (129 aa)). Cystine bridges form between C24-C145, C48-C133, C83-C99, and C95-C113. Catalysis depends on residues E53 and D71.

It belongs to the glycosyl hydrolase 22 family. In terms of assembly, monomer. In terms of tissue distribution, trachea.

It catalyses the reaction Hydrolysis of (1-&gt;4)-beta-linkages between N-acetylmuramic acid and N-acetyl-D-glucosamine residues in a peptidoglycan and between N-acetyl-D-glucosamine residues in chitodextrins.. Its function is as follows. Lysozymes have primarily a bacteriolytic function; those in tissues and body fluids are associated with the monocyte-macrophage system and enhance the activity of immunoagents. The chain is Lysozyme C, tracheal isozyme from Bos taurus (Bovine).